Reading from the N-terminus, the 215-residue chain is Probable phosphoglycerate mutase GpmB (215 aa).

Substrate contacts are provided by residues 8–15 (RHGETQWN), 21–22 (QG), Arg-58, Arg-60, 82–85 (ELDM), 104–105 (RR), and 151–152 (GI). His-9 serves as the catalytic Tele-phosphohistidine intermediate. The Proton donor/acceptor role is filled by Glu-82.

It belongs to the phosphoglycerate mutase family. GpmB subfamily.

It carries out the reaction (2R)-2-phosphoglycerate = (2R)-3-phosphoglycerate. Its pathway is carbohydrate degradation; glycolysis; pyruvate from D-glyceraldehyde 3-phosphate: step 3/5. The sequence is that of Probable phosphoglycerate mutase GpmB from Citrobacter koseri (strain ATCC BAA-895 / CDC 4225-83 / SGSC4696).